Reading from the N-terminus, the 481-residue chain is 3-isopropylmalate dehydratase large subunit (481 aa).

[4Fe-4S] cluster-binding residues include C357, C417, and C420.

It belongs to the aconitase/IPM isomerase family. LeuC type 1 subfamily. In terms of assembly, heterodimer of LeuC and LeuD. Requires [4Fe-4S] cluster as cofactor.

It catalyses the reaction (2R,3S)-3-isopropylmalate = (2S)-2-isopropylmalate. It functions in the pathway amino-acid biosynthesis; L-leucine biosynthesis; L-leucine from 3-methyl-2-oxobutanoate: step 2/4. In terms of biological role, catalyzes the isomerization between 2-isopropylmalate and 3-isopropylmalate, via the formation of 2-isopropylmaleate. This chain is 3-isopropylmalate dehydratase large subunit, found in Mycolicibacterium gilvum (strain PYR-GCK) (Mycobacterium gilvum (strain PYR-GCK)).